We begin with the raw amino-acid sequence, 701 residues long: Potassium-transporting ATPase ATP-binding subunit (701 aa).

The disordered stretch occupies residues 1–28; sequence MNPDAPTPKNKSSRSRPSDRPQARKKAK. 4 helical membrane passes run 57-77, 90-110, 245-265, and 276-296; these read MFLV…PNLF, GILT…EAVA, VLLA…PVFA, and ILVA…LSAI. D329 functions as the 4-aspartylphosphate intermediate in the catalytic mechanism. ATP contacts are provided by residues D366, E370, 397–404, and K416; that span reads FSAKTRMS. The Mg(2+) site is built by D539 and D543. 3 helical membrane passes run 599-619, 635-655, and 681-701; these read FSLA…FASA, AVLS…PLAL, and VIAP…VGLA.

This sequence belongs to the cation transport ATPase (P-type) (TC 3.A.3) family. Type IA subfamily. The system is composed of three essential subunits: KdpA, KdpB and KdpC.

It is found in the cell membrane. It carries out the reaction K(+)(out) + ATP + H2O = K(+)(in) + ADP + phosphate + H(+). In terms of biological role, part of the high-affinity ATP-driven potassium transport (or Kdp) system, which catalyzes the hydrolysis of ATP coupled with the electrogenic transport of potassium into the cytoplasm. This subunit is responsible for energy coupling to the transport system and for the release of the potassium ions to the cytoplasm. The chain is Potassium-transporting ATPase ATP-binding subunit from Anabaena sp. (strain L31).